The following is a 119-amino-acid chain: Phosphoribosyl-AMP cyclohydrolase (119 aa).

Aspartate 71 contributes to the Mg(2+) binding site. Cysteine 72 is a binding site for Zn(2+). Mg(2+)-binding residues include aspartate 73 and aspartate 75. 2 residues coordinate Zn(2+): cysteine 90 and cysteine 97.

Belongs to the PRA-CH family. Homodimer. Mg(2+) is required as a cofactor. Requires Zn(2+) as cofactor.

It is found in the cytoplasm. It carries out the reaction 1-(5-phospho-beta-D-ribosyl)-5'-AMP + H2O = 1-(5-phospho-beta-D-ribosyl)-5-[(5-phospho-beta-D-ribosylamino)methylideneamino]imidazole-4-carboxamide. It functions in the pathway amino-acid biosynthesis; L-histidine biosynthesis; L-histidine from 5-phospho-alpha-D-ribose 1-diphosphate: step 3/9. Catalyzes the hydrolysis of the adenine ring of phosphoribosyl-AMP. This Brucella abortus (strain 2308) protein is Phosphoribosyl-AMP cyclohydrolase.